Here is a 250-residue protein sequence, read N- to C-terminus: UPF0193 protein EVG1 homolog (250 aa).

Positions 86 to 110 are disordered; the sequence is ESLRNGEPLPLPEPPRPNTNNDPDK.

It belongs to the UPF0193 (EVG1) family.

This is UPF0193 protein EVG1 homolog from Drosophila melanogaster (Fruit fly).